The chain runs to 197 residues: MRIYQCHFCSSPVYPGHGIMFVRNDAKEFRFCRSKCHKNFKQRRNPRKLKWTKAFRKAAGKELAVDSTLTFAQRRNVPVRYNRELVATTLKAMSRIEEIRQKRERAFYKNRMKGNSERDFLRDKKLVETNPELLRLREVEIANRLAKEQAAAEEVSEEESEEEEDMEVDSEEEEEEKLQKQKILLKNKKRNAKKLAF.

Residues 147–180 form a disordered region; that stretch reads KEQAAAEEVSEEESEEEEDMEVDSEEEEEEKLQK. Positions 154–176 are enriched in acidic residues; sequence EVSEEESEEEEDMEVDSEEEEEE.

Belongs to the eukaryotic ribosomal protein eL24 family. In terms of assembly, associated with nucleolar and cytoplasmic pre-60S particles. At the end of biogenesis it dissociates from cytoplasmic pre-60S particles and is likely to be exchanged for its ribosomal homolog, RPL24.

It is found in the cytoplasm. The protein resides in the nucleus. Its function is as follows. Involved in the biogenesis of the 60S ribosomal subunit. Ensures the docking of NOG1 to pre-60S particles. Activates and recruits ATPase AFG2 to cytoplasmic pre-60S ribosomal particles. The polypeptide is Ribosome biogenesis protein RLP24 (RLP24) (Candida glabrata (strain ATCC 2001 / BCRC 20586 / JCM 3761 / NBRC 0622 / NRRL Y-65 / CBS 138) (Yeast)).